The sequence spans 504 residues: L-amino-acid oxidase (504 aa).

A signal peptide spans 1–18 (MNVFFMFSLLFLAALGSC). Residues C28 and C191 are joined by a disulfide bond. Residues 61–62 (MS), 81–82 (EA), R89, and 105–108 (GPMR) each bind FAD. Position 108 (R108) interacts with substrate. N190 is a glycosylation site (N-linked (GlcNAc...) asparagine). Residue H241 participates in substrate binding. V279 is an FAD binding site. Cysteines 349 and 430 form a disulfide. An N-linked (GlcNAc...) asparagine glycan is attached at N379. A substrate-binding site is contributed by Y390. FAD contacts are provided by residues E475 and 482-487 (GWIDST). 482 to 483 (GW) lines the substrate pocket.

It belongs to the flavin monoamine oxidase family. FIG1 subfamily. In terms of assembly, homodimer; non-covalently linked. It depends on FAD as a cofactor. Expressed by the venom gland.

It is found in the secreted. It catalyses the reaction an L-alpha-amino acid + O2 + H2O = a 2-oxocarboxylate + H2O2 + NH4(+). The catalysed reaction is L-leucine + O2 + H2O = 4-methyl-2-oxopentanoate + H2O2 + NH4(+). Its function is as follows. Catalyzes an oxidative deamination of predominantly hydrophobic and aromatic L-amino acids, thus producing hydrogen peroxide that may contribute to the diverse toxic effects of this enzyme. Shows activity on L-Leu. Exhibits diverse biological activities, such as hemorrhage, hemolysis, edema, antibacterial and antiparasitic activities, as well as regulation of platelet aggregation. Its effect on platelets is controversial, since it either induces aggregation or inhibits agonist-induced aggregation. These different effects are probably due to different experimental conditions. This protein induces apoptosis of cultured HeLa cells. This chain is L-amino-acid oxidase, found in Gloydius halys (Chinese water mocassin).